The following is a 1097-amino-acid chain: Protein STICHEL-like 3 (1097 aa).

5 disordered regions span residues 1-22, 74-168, 220-293, 321-358, and 400-436; these read MTTT…NNRI, SLRD…YRIG, NVRP…GFGE, GRSL…DSSS, and DSDL…LTEK. Residues 10–20 show a composition bias toward polar residues; the sequence is RVASSSSTRNN. Residues 95–113 show a composition bias toward basic and acidic residues; the sequence is LPKKGDLVEGGRRSVDLKK. The segment covering 126–136 has biased composition (polar residues); that stretch reads PVVNFGTSKVT. Over residues 137–168 the composition is skewed to basic and acidic residues; sequence PSDERSGPVSGERDSGRRVKREESSRKSYRIG. Residues 227-241 show a composition bias toward gly residues; the sequence is YGGGGGGGNTRGCAG. A compositionally biased stretch (basic residues) spans 245-259; sequence RPKRRKFRGTRRVRG. 2 stretches are compositionally biased toward basic and acidic residues: residues 281-291 and 332-345; these read VEKHDGEKEGF and KGGR…RNGS. Over residues 346–358 the composition is skewed to low complexity; the sequence is DKMMIQSDDDSSS. Residues 411–429 are compositionally biased toward basic residues; that stretch reads EKKHKKKSHVNARHRHRQQ. An ATP-binding site is contributed by 472–479; sequence GPNGTGKT. C491, C500, C503, and C506 together coordinate Zn(2+). Residues 742–770 are a coiled coil; the sequence is KEDMEKLRQALKTLSEAEKQLRVSNDKLT. Disordered regions lie at residues 790–828, 913–932, and 956–1003; these read SSTA…DSRK, DPRN…DKSL, and VTES…SQSI. Composition is skewed to basic and acidic residues over residues 796–807 and 818–828; these read GGRESSDHHLDP and GLDRRRGDSRK. Polar residues predominate over residues 993-1003; sequence ASQSQNQSQSI.

Belongs to the DnaX/STICHEL family.

This is Protein STICHEL-like 3 from Arabidopsis thaliana (Mouse-ear cress).